The primary structure comprises 373 residues: Leucoanthocyanidin dioxygenase 2 (373 aa).

In terms of domain architecture, Fe2OG dioxygenase spans 216–315 (LLLQLKINYY…RVSWVVFCEP (100 aa)). His-240, Asp-242, and His-296 together coordinate Fe cation. Arg-306 is a 2-oxoglutarate binding site.

It belongs to the iron/ascorbate-dependent oxidoreductase family. The cofactor is L-ascorbate. Fe(2+) is required as a cofactor.

It catalyses the reaction a (2R,3S,4S)-leucoanthocyanidin + 2-oxoglutarate + O2 = a 4-H-anthocyanidin with a 3-hydroxy group + succinate + CO2 + 2 H2O. It participates in pigment biosynthesis; anthocyanin biosynthesis. Involved in anthocyanin and protoanthocyanidin biosynthesis by catalyzing the oxidation of leucoanthocyanidins into anthocyanidins. This chain is Leucoanthocyanidin dioxygenase 2, found in Oryza sativa subsp. japonica (Rice).